Reading from the N-terminus, the 161-residue chain is Nucleotide-binding protein Daci_4781 (161 aa).

It belongs to the YajQ family.

Nucleotide-binding protein. The polypeptide is Nucleotide-binding protein Daci_4781 (Delftia acidovorans (strain DSM 14801 / SPH-1)).